The chain runs to 423 residues: Cell adhesion molecule CEACAM16 (423 aa).

The N-terminal stretch at 1-22 is a signal peptide; sequence MKMPLTWGSWFLLSAWILNAGA. N-linked (GlcNAc...) asparagine glycosylation is present at Asn38. The interval 77–96 is disordered; the sequence is ETPGPAHTGREAVRPDGSLD. Residues 84 to 95 show a composition bias toward basic and acidic residues; the sequence is TGREAVRPDGSL. Ig-like C2-type domains follow at residues 134–219 and 224–310; these read PPTV…LNLT and PERV…ASVV. A disulfide bridge links Cys155 with Cys202. N-linked (GlcNAc...) asparagine glycosylation is present at Asn217. Cysteines 253 and 294 form a disulfide.

The protein belongs to the immunoglobulin superfamily. CEA family. As to quaternary structure, homooligomer; can for homodimers and homotetramers. Interacts with TECTA and TECTB.

It is found in the secreted. Required for proper hearing, plays a role in maintaining the integrity of the tectorial membrane. This is Cell adhesion molecule CEACAM16 from Rattus norvegicus (Rat).